The following is a 379-amino-acid chain: tRNA(Met) cytidine acetate ligase (379 aa).

Residues 7–20 (ITEY…HQYH), G100, N153, and R178 each bind ATP.

Belongs to the TmcAL family.

The protein resides in the cytoplasm. The enzyme catalyses cytidine(34) in elongator tRNA(Met) + acetate + ATP = N(4)-acetylcytidine(34) in elongator tRNA(Met) + AMP + diphosphate. Its function is as follows. Catalyzes the formation of N(4)-acetylcytidine (ac(4)C) at the wobble position of elongator tRNA(Met), using acetate and ATP as substrates. First activates an acetate ion to form acetyladenylate (Ac-AMP) and then transfers the acetyl group to tRNA to form ac(4)C34. The chain is tRNA(Met) cytidine acetate ligase from Staphylococcus aureus (strain MRSA252).